A 482-amino-acid chain; its full sequence is Isoxanthopterin deaminase (482 aa).

Residues His-74 and His-76 each coordinate Zn(2+). Gln-79 contacts substrate. Position 246 (His-246) interacts with Zn(2+). Positions 249 and 283 each coordinate substrate. Zn(2+) is bound by residues His-283 and Asp-334.

It belongs to the metallo-dependent hydrolases superfamily. ATZ/TRZ family. Requires Zn(2+) as cofactor.

It catalyses the reaction a 2-amino-4-hydroxypteridine + H2O + H(+) = a 2,4-dihydroxypteridine + NH4(+). This Unknown prokaryotic organism protein is Isoxanthopterin deaminase.